Consider the following 256-residue polypeptide: Indole-3-glycerol phosphate synthase (256 aa).

It belongs to the TrpC family.

The catalysed reaction is 1-(2-carboxyphenylamino)-1-deoxy-D-ribulose 5-phosphate + H(+) = (1S,2R)-1-C-(indol-3-yl)glycerol 3-phosphate + CO2 + H2O. It participates in amino-acid biosynthesis; L-tryptophan biosynthesis; L-tryptophan from chorismate: step 4/5. The polypeptide is Indole-3-glycerol phosphate synthase (Caldanaerobacter subterraneus subsp. tengcongensis (strain DSM 15242 / JCM 11007 / NBRC 100824 / MB4) (Thermoanaerobacter tengcongensis)).